We begin with the raw amino-acid sequence, 421 residues long: UDP-N-acetylglucosamine 1-carboxyvinyltransferase (421 aa).

Residue 22-23 participates in phosphoenolpyruvate binding; it reads KN. Position 93 (Arg-93) interacts with UDP-N-acetyl-alpha-D-glucosamine. Catalysis depends on Cys-117, which acts as the Proton donor. Cys-117 is subject to 2-(S-cysteinyl)pyruvic acid O-phosphothioketal. Residues 122 to 126, Asp-308, and Ile-330 contribute to the UDP-N-acetyl-alpha-D-glucosamine site; that span reads RPVDL.

Belongs to the EPSP synthase family. MurA subfamily.

Its subcellular location is the cytoplasm. It carries out the reaction phosphoenolpyruvate + UDP-N-acetyl-alpha-D-glucosamine = UDP-N-acetyl-3-O-(1-carboxyvinyl)-alpha-D-glucosamine + phosphate. The protein operates within cell wall biogenesis; peptidoglycan biosynthesis. In terms of biological role, cell wall formation. Adds enolpyruvyl to UDP-N-acetylglucosamine. In Pseudomonas fluorescens (strain Pf0-1), this protein is UDP-N-acetylglucosamine 1-carboxyvinyltransferase.